A 613-amino-acid polypeptide reads, in one-letter code: Probable indole-3-acetic acid-amido synthetase GH3.12 (613 aa).

It belongs to the IAA-amido conjugating enzyme family. In terms of tissue distribution, expressed in roots.

Functionally, may catalyze the synthesis of indole-3-acetic acid (IAA)-amino acid conjugates, providing a mechanism for the plant to cope with the presence of excess auxin. This Oryza sativa subsp. japonica (Rice) protein is Probable indole-3-acetic acid-amido synthetase GH3.12 (GH3.12).